The following is a 153-amino-acid chain: Large ribosomal subunit protein uL30 (153 aa).

The protein belongs to the universal ribosomal protein uL30 family. As to quaternary structure, part of the 50S ribosomal subunit.

This is Large ribosomal subunit protein uL30 from Methanosarcina barkeri (strain Fusaro / DSM 804).